A 504-amino-acid polypeptide reads, in one-letter code: Sugar transport protein 14 (504 aa).

Over 1-25 (MAGGALTDEGGLKRAHLYEHRITSY) the chain is Cytoplasmic. Helical transmembrane passes span 26-46 (FIFA…DLGV), 84-104 (ILTL…FGAS), 121-141 (VSFF…MLIL), 144-164 (IFLG…LSEM), 171-191 (GTVN…ANLI), 205-225 (LSLG…LVLP), 286-308 (LVIG…ILFY), 315-337 (SLGF…LVVA), 352-372 (FLLL…GVTL), 382-402 (LPKS…LAYG), 428-448 (VVVC…LVSL), and 454-474 (GIFL…YFLL). Residues 475 to 504 (PETKQVPIEEVYLLWRQHWLWKKYVEDVDE) lie on the Cytoplasmic side of the membrane.

The protein belongs to the major facilitator superfamily. Sugar transporter (TC 2.A.1.1) family.

The protein localises to the membrane. Its function is as follows. Mediates an active uptake of hexoses, probably by sugar/hydrogen symport. The protein is Sugar transport protein 14 (STP14) of Arabidopsis thaliana (Mouse-ear cress).